The primary structure comprises 257 residues: Flap endonuclease Xni (257 aa).

D109 contacts Mg(2+). The 5'-3' exonuclease domain maps to 165 to 254 (VKPEQLADYW…GFNLQDIRYE (90 aa)). K(+) contacts are provided by L176, P185, I187, and I190. Residues 189-194 (GIGPKA) form an interaction with DNA region.

The protein belongs to the Xni family. It depends on Mg(2+) as a cofactor. K(+) serves as cofactor.

Functionally, has flap endonuclease activity. During DNA replication, flap endonucleases cleave the 5'-overhanging flap structure that is generated by displacement synthesis when DNA polymerase encounters the 5'-end of a downstream Okazaki fragment. This chain is Flap endonuclease Xni, found in Vibrio atlanticus (strain LGP32) (Vibrio splendidus (strain Mel32)).